Here is a 473-residue protein sequence, read N- to C-terminus: Ribulose bisphosphate carboxylase large chain (473 aa).

Substrate contacts are provided by asparagine 116 and threonine 166. Catalysis depends on lysine 168, which acts as the Proton acceptor. A substrate-binding site is contributed by lysine 170. Positions 194, 196, and 197 each coordinate Mg(2+). Lysine 194 is subject to N6-carboxylysine. Catalysis depends on histidine 287, which acts as the Proton acceptor. Substrate-binding residues include arginine 288, histidine 320, and serine 372.

Belongs to the RuBisCO large chain family. Type I subfamily. In terms of assembly, heterohexadecamer of 8 large chains and 8 small chains. In R.sphaeroides the complex is approximately 500 kDa. Requires Mg(2+) as cofactor.

It carries out the reaction 2 (2R)-3-phosphoglycerate + 2 H(+) = D-ribulose 1,5-bisphosphate + CO2 + H2O. The enzyme catalyses D-ribulose 1,5-bisphosphate + O2 = 2-phosphoglycolate + (2R)-3-phosphoglycerate + 2 H(+). Its function is as follows. RuBisCO catalyzes two reactions: the carboxylation of D-ribulose 1,5-bisphosphate, the primary event in carbon dioxide fixation, as well as the oxidative fragmentation of the pentose substrate. Both reactions occur simultaneously and in competition at the same active site. The protein is Ribulose bisphosphate carboxylase large chain of Thiobacillus denitrificans (strain ATCC 25259 / T1).